The chain runs to 240 residues: MADKKEPAPGWPILKGEYEVGDVKNCVLVITCGSHLPGQPILDAGAAVTGSCKTENLGIEKVVAHIISNPNIRYLLVTGSEVKGHITGQSVMSLHANGVKDNRISGALGAIPYVENLNEDAIARFQEQVDVVNLLDTEDMGAITSKVKELASKDPGAFDAEPMIVEISEEGEEEEEGGAVRPVSGEIAVIRSRLKAIEARMMDIGNLNKFHSGVHAGKIEGAMIGLTVTISLLGLLLLGR.

At 1-218 the chain is on the cytoplasmic side; sequence MADKKEPAPG…KFHSGVHAGK (218 aa). His-85 is a 5-hydroxybenzimidazolylcob(I)amide binding site. A helical transmembrane segment spans residues 219 to 239; that stretch reads IEGAMIGLTVTISLLGLLLLG. Residue Arg-240 is a topological domain, extracellular.

The protein belongs to the MtrA family. The complex is composed of 8 subunits; MtrA, MtrB, MtrC, MtrD, MtrE, MtrF, MtrG and MtrH. Requires 5-hydroxybenzimidazolylcob(I)amide as cofactor.

It is found in the cell membrane. The catalysed reaction is 5-methyl-5,6,7,8-tetrahydromethanopterin + coenzyme M + 2 Na(+)(in) = 5,6,7,8-tetrahydromethanopterin + methyl-coenzyme M + 2 Na(+)(out). It functions in the pathway one-carbon metabolism; methanogenesis from CO(2); methyl-coenzyme M from 5,10-methylene-5,6,7,8-tetrahydromethanopterin: step 2/2. Functionally, part of a complex that catalyzes the formation of methyl-coenzyme M and tetrahydromethanopterin from coenzyme M and methyl-tetrahydromethanopterin. This is an energy-conserving, sodium-ion translocating step. This Methanosarcina barkeri (strain Fusaro / DSM 804) protein is Tetrahydromethanopterin S-methyltransferase subunit A.